Reading from the N-terminus, the 391-residue chain is NADH-quinone oxidoreductase subunit D (391 aa).

Belongs to the complex I 49 kDa subunit family. NDH-1 is composed of 14 different subunits. Subunits NuoB, C, D, E, F, and G constitute the peripheral sector of the complex.

It is found in the cell inner membrane. The enzyme catalyses a quinone + NADH + 5 H(+)(in) = a quinol + NAD(+) + 4 H(+)(out). NDH-1 shuttles electrons from NADH, via FMN and iron-sulfur (Fe-S) centers, to quinones in the respiratory chain. The immediate electron acceptor for the enzyme in this species is believed to be ubiquinone. Couples the redox reaction to proton translocation (for every two electrons transferred, four hydrogen ions are translocated across the cytoplasmic membrane), and thus conserves the redox energy in a proton gradient. The chain is NADH-quinone oxidoreductase subunit D from Rickettsia felis (strain ATCC VR-1525 / URRWXCal2) (Rickettsia azadi).